The following is a 93-amino-acid chain: Small ribosomal subunit protein uS19 (93 aa).

The protein belongs to the universal ribosomal protein uS19 family.

Its function is as follows. Protein S19 forms a complex with S13 that binds strongly to the 16S ribosomal RNA. The chain is Small ribosomal subunit protein uS19 from Rhodococcus erythropolis (strain PR4 / NBRC 100887).